Here is a 749-residue protein sequence, read N- to C-terminus: Protein kinase domain-containing protein ppk32 (749 aa).

Residues 21–317 (IQKENSVQVG…MFELERSPYF (297 aa)) enclose the Protein kinase domain. Disordered regions lie at residues 598–677 (KKLQ…VTAK) and 706–749 (PLIP…KSLL). The span at 602-651 (SKPSSVVPNRITTDPFSSQTKEATSKPSSISPNKATTNIFTSQASLSSQG) shows a compositional bias: polar residues. Residue S632 is modified to Phosphoserine. 2 stretches are compositionally biased toward low complexity: residues 657–670 (SSAS…QRAS) and 721–735 (NRRV…NTVT).

It localises to the cytoplasm. The protein is Protein kinase domain-containing protein ppk32 (ppk32) of Schizosaccharomyces pombe (strain 972 / ATCC 24843) (Fission yeast).